We begin with the raw amino-acid sequence, 158 residues long: Transcription elongation factor GreA (158 aa).

This sequence belongs to the GreA/GreB family.

Its function is as follows. Necessary for efficient RNA polymerase transcription elongation past template-encoded arresting sites. The arresting sites in DNA have the property of trapping a certain fraction of elongating RNA polymerases that pass through, resulting in locked ternary complexes. Cleavage of the nascent transcript by cleavage factors such as GreA or GreB allows the resumption of elongation from the new 3'terminus. GreA releases sequences of 2 to 3 nucleotides. In Rhizobium leguminosarum bv. trifolii (strain WSM2304), this protein is Transcription elongation factor GreA.